We begin with the raw amino-acid sequence, 71 residues long: Small ribosomal subunit protein bS21 (71 aa).

This sequence belongs to the bacterial ribosomal protein bS21 family.

This is Small ribosomal subunit protein bS21 from Pseudoalteromonas atlantica (strain T6c / ATCC BAA-1087).